Here is a 686-residue protein sequence, read N- to C-terminus: MADIKTGIFAKNVQKRLNRAQEKVLQKLGKADETKDEQFEEYVQNFKRQEAEGTRLQRELRGYLAAIKGMQEASMKLTESLHEVYEPDWYGREDVKMVGEKCDVLWEDFHQKLVDGSLLTLDTYLGQFPDIKNRIAKRSRKLVDYDSARHHLEALQSSKRKDESRISKAEEEFQKAQKVFEEFNVDLQEELPSLWSSRVGFYVNTFKNVSSLEAKFHKEIAVLCHKLYEVMTKLGDQHADKAFSIQGAPSDSGPLRIAKTPSPPEEPSPLPSPTASPNHTLAPASPAPVRPRSPSQTRKGPPVPPLPKVTPTKELKQENIINFFEDNFVPEINVTTPSQNEVLEVKKEETLLDLDFDPFKPDVAPAGSAAATHSPMSQTLPWDLWTTSTDLVQPASGGSFNDFTQAQDTSLFTMQTDQNMAETEQALPTEPQAEEPPATAAAPTAGLDLGLEMEEPKEEAVIPPATDTGETVETAVPTEGAPVEEAEAEKAALPAGEGGSPEGAKIDGESTELAISESPQPVEPEAGAPQVIPSVVIEPASNHEGEGEHQETATGTEPREAAEDVAAQGSAGEKQEVATEPTPLDSQATLPASAGAVDASLSAGDATQELPPGFLYKVETLHDFEAANSDELNLQRGDVVLVVPSDSEADQDAGWLVGVKESDWLQYRDLATYKGLFPENFTRRLE.

Coiled-coil stretches lie at residues 10–83 and 144–191; these read AKNV…SLHE and DYDS…QEEL. Residues 24-240 enclose the BAR domain; that stretch reads VLQKLGKADE…MTKLGDQHAD (217 aa). Disordered stretches follow at residues 244-314, 421-441, and 483-597; these read SIQG…PTKE, AETE…ATAA, and VEEA…AGAV. Position 252 is a phosphoserine (serine 252). At threonine 260 the chain carries Phosphothreonine. The span at 261–274 shows a compositional bias: pro residues; it reads PSPPEEPSPLPSPT. Serine 262, serine 268, serine 272, and serine 276 each carry phosphoserine. Threonine 280 carries the post-translational modification Phosphothreonine. Residues 424 to 441 show a composition bias toward low complexity; that stretch reads EQALPTEPQAEEPPATAA. Serine 500 carries the phosphoserine modification. A compositionally biased stretch (basic and acidic residues) spans 541–562; sequence SNHEGEGEHQETATGTEPREAA. The SH3 domain occupies 613–686; it reads GFLYKVETLH…FPENFTRRLE (74 aa). Residue serine 629 is modified to Phosphoserine.

As to quaternary structure, heterodimer with BIN1. Binds SH3GLB1. Interacts with REPS1 and SGIP1. Binds AP2A2. Interacts with AP2B1. Interacts with DNM1 and SYNJ1.

It is found in the cytoplasmic vesicle. It localises to the secretory vesicle. Its subcellular location is the synaptic vesicle membrane. The protein localises to the cytoplasm. The protein resides in the cytoskeleton. May participate in mechanisms of regulated exocytosis in synapses and certain endocrine cell types. May control the properties of the membrane associated cytoskeleton. The polypeptide is Amphiphysin (Amph) (Mus musculus (Mouse)).